Reading from the N-terminus, the 98-residue chain is Integration host factor subunit beta (98 aa).

The protein belongs to the bacterial histone-like protein family. In terms of assembly, heterodimer of an alpha and a beta chain.

Its function is as follows. This protein is one of the two subunits of integration host factor, a specific DNA-binding protein that functions in genetic recombination as well as in transcriptional and translational control. The polypeptide is Integration host factor subunit beta (Gluconacetobacter diazotrophicus (strain ATCC 49037 / DSM 5601 / CCUG 37298 / CIP 103539 / LMG 7603 / PAl5)).